We begin with the raw amino-acid sequence, 182 residues long: ATP synthase subunit delta (182 aa).

It belongs to the ATPase delta chain family. F-type ATPases have 2 components, F(1) - the catalytic core - and F(0) - the membrane proton channel. F(1) has five subunits: alpha(3), beta(3), gamma(1), delta(1), epsilon(1). CF(0) has four main subunits: a(1), b(1), b'(1) and c(10-14). The alpha and beta chains form an alternating ring which encloses part of the gamma chain. F(1) is attached to F(0) by a central stalk formed by the gamma and epsilon chains, while a peripheral stalk is formed by the delta, b and b' chains.

The protein localises to the cellular thylakoid membrane. Its function is as follows. F(1)F(0) ATP synthase produces ATP from ADP in the presence of a proton or sodium gradient. F-type ATPases consist of two structural domains, F(1) containing the extramembraneous catalytic core and F(0) containing the membrane proton channel, linked together by a central stalk and a peripheral stalk. During catalysis, ATP synthesis in the catalytic domain of F(1) is coupled via a rotary mechanism of the central stalk subunits to proton translocation. This protein is part of the stalk that links CF(0) to CF(1). It either transmits conformational changes from CF(0) to CF(1) or is implicated in proton conduction. The sequence is that of ATP synthase subunit delta from Parasynechococcus marenigrum (strain WH8102).